The chain runs to 138 residues: Small ribosomal subunit protein uS11 (138 aa).

Residues 1–12 show a composition bias toward polar residues; sequence MAKQSAKGSTTT. The segment at 1–37 is disordered; that stretch reads MAKQSAKGSTTTKRQRGKRREKKNVPRGQAHIQSTFN. Over residues 13 to 22 the composition is skewed to basic residues; the sequence is KRQRGKRREK.

Belongs to the universal ribosomal protein uS11 family. Part of the 30S ribosomal subunit. Interacts with proteins S7 and S18. Binds to IF-3.

In terms of biological role, located on the platform of the 30S subunit, it bridges several disparate RNA helices of the 16S rRNA. Forms part of the Shine-Dalgarno cleft in the 70S ribosome. This chain is Small ribosomal subunit protein uS11, found in Roseiflexus castenholzii (strain DSM 13941 / HLO8).